The following is a 707-amino-acid chain: Polyribonucleotide nucleotidyltransferase (707 aa).

Positions 487 and 493 each coordinate Mg(2+). One can recognise a KH domain in the interval 554-613 (PSMATIKIDPDKIRDVIGKGGATIRKICDDTGASIDLDDDGTVRIYAEDKTAAKAAIDTV). Residues 623–691 (GKLYRGTVAR…NRNRVKLSIK (69 aa)) form the S1 motif domain.

It belongs to the polyribonucleotide nucleotidyltransferase family. As to quaternary structure, component of the RNA degradosome, which is a multiprotein complex involved in RNA processing and mRNA degradation. The cofactor is Mg(2+).

It localises to the cytoplasm. The catalysed reaction is RNA(n+1) + phosphate = RNA(n) + a ribonucleoside 5'-diphosphate. Involved in mRNA degradation. Catalyzes the phosphorolysis of single-stranded polyribonucleotides processively in the 3'- to 5'-direction. The sequence is that of Polyribonucleotide nucleotidyltransferase from Chromohalobacter salexigens (strain ATCC BAA-138 / DSM 3043 / CIP 106854 / NCIMB 13768 / 1H11).